The following is a 185-amino-acid chain: Thymidine kinase (185 aa).

17 to 24 lines the ATP pocket; sequence GPMFAGKT. Glutamate 92 (proton acceptor) is an active-site residue. Phenylalanine 121 is a substrate binding site. 2 residues coordinate Zn(2+): cysteine 146 and cysteine 149. 166–170 contacts substrate; that stretch reads LILAG. Zn(2+) is bound by residues cysteine 179 and cysteine 182.

Belongs to the thymidine kinase family.

It catalyses the reaction thymidine + ATP = dTMP + ADP + H(+). Its function is as follows. Phosphorylates thymidine. ASFV replicates in the cytoplasm of infected cells and contains genes encoding a number of enzymes needed for DNA synthesis, including thymidine kinase. Important for growth in swine macrophages in vitro and is a virus virulence factor in swine. This African swine fever virus (isolate Pig/Kenya/KEN-50/1950) (ASFV) protein is Thymidine kinase.